Reading from the N-terminus, the 134-residue chain is Profilin-3 (134 aa).

The cysteines at positions 13 and 118 are disulfide-linked. The Involved in PIP2 interaction signature appears at Ala-84–Thr-100. Phosphothreonine is present on Thr-114.

It belongs to the profilin family. In terms of assembly, occurs in many kinds of cells as a complex with monomeric actin in a 1:1 ratio. Post-translationally, phosphorylated by MAP kinases.

The protein resides in the cytoplasm. The protein localises to the cytoskeleton. In terms of biological role, binds to actin and affects the structure of the cytoskeleton. At high concentrations, profilin prevents the polymerization of actin, whereas it enhances it at low concentrations. In Olea europaea (Common olive), this protein is Profilin-3.